We begin with the raw amino-acid sequence, 101 residues long: Small ribosomal subunit protein bS18c (101 aa).

Belongs to the bacterial ribosomal protein bS18 family. As to quaternary structure, part of the 30S ribosomal subunit.

It localises to the plastid. The protein localises to the chloroplast. The sequence is that of Small ribosomal subunit protein bS18c from Vitis vinifera (Grape).